Consider the following 418-residue polypeptide: Queuine tRNA-ribosyltransferase accessory subunit 2 (418 aa).

Residues Cys325, Cys327, Cys330, and His356 each contribute to the Zn(2+) site.

Belongs to the queuine tRNA-ribosyltransferase family. QTRT2 subfamily. As to quaternary structure, heterodimer of a catalytic subunit and an accessory subunit. Requires Zn(2+) as cofactor.

Its subcellular location is the cytoplasm. Its function is as follows. Non-catalytic subunit of the queuine tRNA-ribosyltransferase (TGT) that catalyzes the base-exchange of a guanine (G) residue with queuine (Q) at position 34 (anticodon wobble position) in tRNAs with GU(N) anticodons (tRNA-Asp, -Asn, -His and -Tyr), resulting in the hypermodified nucleoside queuosine (7-(((4,5-cis-dihydroxy-2-cyclopenten-1-yl)amino)methyl)-7-deazaguanosine). The sequence is that of Queuine tRNA-ribosyltransferase accessory subunit 2 from Drosophila melanogaster (Fruit fly).